We begin with the raw amino-acid sequence, 476 residues long: Glycogen synthase (476 aa).

ADP-alpha-D-glucose is bound at residue K15.

Belongs to the glycosyltransferase 1 family. Bacterial/plant glycogen synthase subfamily.

The enzyme catalyses [(1-&gt;4)-alpha-D-glucosyl](n) + ADP-alpha-D-glucose = [(1-&gt;4)-alpha-D-glucosyl](n+1) + ADP + H(+). It functions in the pathway glycan biosynthesis; glycogen biosynthesis. Its function is as follows. Synthesizes alpha-1,4-glucan chains using ADP-glucose. The polypeptide is Glycogen synthase (Streptococcus equi subsp. zooepidemicus (strain H70)).